A 435-amino-acid polypeptide reads, in one-letter code: Cyclic GMP-AMP synthase-like receptor (435 aa).

ATP is bound by residues S70 and 82–84 (EFD). Mg(2+) contacts are provided by E82, D84, and D209. GTP is bound at residue D209. Residues K286 and 300–304 (SYYVK) each bind ATP. Mn(2+) contacts are provided by L311, D312, and D317.

This sequence belongs to the mab-21 family. Mg(2+) is required as a cofactor. Mn(2+) serves as cofactor.

It carries out the reaction GTP + ATP = 2',3'-cGAMP + 2 diphosphate. It catalyses the reaction GTP + ATP = pppGp(2'-5')A + diphosphate. The enzyme catalyses pppGp(2'-5')A = 2',3'-cGAMP + diphosphate. In terms of biological role, nucleotidyltransferase that catalyzes the formation of cyclic GMP-AMP (2',3'-cGAMP) from ATP and GTP and plays a key role in innate immunity. Directly binds some unknown ligand, activating the nucleotidyltransferase activity, leading to synthesis of 2',3'-cGAMP, a second messenger that binds to and activates Sting, thereby triggering the immune response via activation of the NF-kappa-B transcription factor. The chain is Cyclic GMP-AMP synthase-like receptor from Ctenocephalides felis (Cat flea).